The following is a 1277-amino-acid chain: NPC intracellular cholesterol transporter 1 (1277 aa).

The signal sequence occupies residues 1–22 (MSARGPAFGLLLLLLCPVQVFS). Residues 23–269 (QSCVWYGECG…WRILGLDAMY (247 aa)) lie on the Lumenal side of the membrane. 9 cysteine pairs are disulfide-bonded: C25-C74, C31-C42, C63-C109, C75-C113, C97-C238, C100-C160, C177-C184, C227-C243, and C240-C247. N41 serves as a coordination point for cholesterol. N-linked (GlcNAc...) asparagine glycosylation occurs at N70. Q79 is a binding site for cholesterol. 2 N-linked (GlcNAc...) asparagine glycosylation sites follow: N122 and N135. An important for cholesterol binding and cholesterol transfer from NPC1 to liposomes region spans residues 175 to 205 (LLCGREAQACNATNWIEYMFNKDNGQAPFTI). N-linked (GlcNAc...) asparagine glycans are attached at residues N185 and N222. Residues 270-290 (VIMWSSYMAFLIVFFGAFFAV) traverse the membrane as a helical segment. The Cytoplasmic portion of the chain corresponds to 291–350 (WCYRKRYFVSEYTPIDGNIAFSVNSSDKGQAFCCDPLGAAFERGLRRLFAQWGAFCVRHP). Residues 351–371 (GCVVFFSLAFIVACSSGLVFI) traverse the membrane as a helical segment. Topologically, residues 372 to 621 (RVTTDPVDLW…ELNRESNSDL (250 aa)) are lumenal. 4 N-linked (GlcNAc...) asparagine glycosylation sites follow: N415, N452, N459, and N478. 2 cysteine pairs are disulfide-bonded: C468–C479 and C516–C533. Residues 620–785 (DLFTILISYA…ITCFVSLLGL (166 aa)) enclose the SSD domain. Residues 622-642 (FTILISYAIMFLYISIALGHI) form a helical membrane-spanning segment. The Cytoplasmic segment spans residues 643–653 (KSCSRLLVDSK). Residues 654–674 (ISLGIAGILIVLSSVACSLGI) traverse the membrane as a helical segment. Residues 675-677 (FSY) lie on the Lumenal side of the membrane. A helical transmembrane segment spans residues 678-698 (IGVPLTLIVIEVIPFLVLAVG). The Cytoplasmic segment spans residues 699 to 734 (VDNIFILVQTYQRDERLQGETLDQQLGRVLGEVAPS). Residues 735-755 (MFLSSFSETVAFFLGGLSVVP) traverse the membrane as a helical segment. The Lumenal portion of the chain corresponds to 756 to 759 (AVHT). Residues 760 to 780 (FSLFAGMAVLIDFLLQITCFV) traverse the membrane as a helical segment. Over 781-832 (SLLGLDIKRQEKNRLDVVCCVQGAEDGAGVQASESCLFRFFKNSYAPLLLKD) the chain is Cytoplasmic. A helical transmembrane segment spans residues 833–853 (WMRPIVIAVFVGVLSFSIAVL). The Lumenal portion of the chain corresponds to 854–1097 (NKVEIGLDQS…EQYLTVIDDT (244 aa)). An N-linked (GlcNAc...) asparagine glycan is attached at N898. C909 and C914 are disulfide-bonded. Residues N916, N931, N961, N968, N1028, and N1063 are each glycosylated (N-linked (GlcNAc...) asparagine). Disulfide bonds link C956–C1011, C957–C979, and C967–C976. The chain crosses the membrane as a helical span at residues 1098–1118 (IFNLGVSLGAIFLVTVVLMGC). Residues 1119–1123 (ELWAT) are Cytoplasmic-facing. Residues 1124–1144 (VIMCVTIAMILVNMFGVMWLW) form a helical membrane-spanning segment. A topological domain (lumenal) is located at residue G1145. Residues 1146–1166 (ISLNAVSLVNLVMSCGISVEF) traverse the membrane as a helical segment. Topologically, residues 1167–1194 (CSHITRAFTLSTKGSRVDRAEEALAHMG) are cytoplasmic. The helical transmembrane segment at 1195–1215 (SSVFSGITLTKFGGIVVLAFA) threads the bilayer. The Lumenal portion of the chain corresponds to 1216 to 1226 (KSQIFQIFYFR). Residues 1227–1247 (MYLAIVLLGATHGLIFLPVLL) form a helical membrane-spanning segment. Residues 1248–1277 (SYIGPSINKAKSLATQERYKGTEREQLLNF) are Cytoplasmic-facing. The required for location in lysosomes stretch occupies residues 1274–1277 (LLNF). The short motif at 1274-1277 (LLNF) is the Di-leucine motif element.

The protein belongs to the patched family. As to quaternary structure, interacts (via the second lumenal domain) with NPC2. Interacts with TMEM97; the interaction may decrease NPC1 availability to the cell. Interacts with TIM1. Interacts with SLC38A9; this interaction inhibits cholesterol-mediated mTORC1 activation via its sterol transport activity. In terms of processing, N-glycosylated. In terms of tissue distribution, detected in corpus luteum, granulosa cells and adrenal gland.

The protein localises to the late endosome membrane. Its subcellular location is the lysosome membrane. It carries out the reaction cholesterol(in) = cholesterol(out). In terms of biological role, intracellular cholesterol transporter which acts in concert with NPC2 and plays an important role in the egress of cholesterol from the endosomal/lysosomal compartment. Unesterified cholesterol that has been released from LDLs in the lumen of the late endosomes/lysosomes is transferred by NPC2 to the cholesterol-binding pocket in the N-terminal domain of NPC1. Cholesterol binds to NPC1 with the hydroxyl group buried in the binding pocket. Binds oxysterol with higher affinity than cholesterol. May play a role in vesicular trafficking in glia, a process that may be crucial for maintaining the structural and functional integrity of nerve terminals. Inhibits cholesterol-mediated mTORC1 activation throught its interaction with SLC38A9. The chain is NPC intracellular cholesterol transporter 1 from Sus scrofa (Pig).